The chain runs to 700 residues: Transketolase (700 aa).

His-45 is a substrate binding site. Thiamine diphosphate contacts are provided by residues Thr-48, His-85, and 133-135 (GPL). Residue Asp-177 participates in Mg(2+) binding. Thiamine diphosphate-binding residues include Gly-178 and Asn-207. Positions 207 and 209 each coordinate Mg(2+). Positions 283, 378, and 405 each coordinate substrate. Position 283 (His-283) interacts with thiamine diphosphate. Catalysis depends on Glu-441, which acts as the Proton donor. Phe-467 contributes to the thiamine diphosphate binding site. Residues His-491, Asp-499, and Arg-552 each coordinate substrate.

Belongs to the transketolase family. Homodimer. It depends on Mg(2+) as a cofactor. The cofactor is Ca(2+). Mn(2+) is required as a cofactor. Requires Co(2+) as cofactor. Thiamine diphosphate serves as cofactor.

The enzyme catalyses D-sedoheptulose 7-phosphate + D-glyceraldehyde 3-phosphate = aldehydo-D-ribose 5-phosphate + D-xylulose 5-phosphate. Its function is as follows. Catalyzes the transfer of a two-carbon ketol group from a ketose donor to an aldose acceptor, via a covalent intermediate with the cofactor thiamine pyrophosphate. The polypeptide is Transketolase (tkt) (Mycobacterium bovis (strain ATCC BAA-935 / AF2122/97)).